A 150-amino-acid polypeptide reads, in one-letter code: Large ribosomal subunit protein bL9 (150 aa).

It belongs to the bacterial ribosomal protein bL9 family.

Its function is as follows. Binds to the 23S rRNA. This is Large ribosomal subunit protein bL9 from Limosilactobacillus reuteri (strain DSM 20016) (Lactobacillus reuteri).